Here is a 718-residue protein sequence, read N- to C-terminus: Cyclomaltodextrin glucanotransferase (718 aa).

A signal peptide spans 1-34 (MFQMAKRAFLSTTLTLGLLAGSALPFLPASAAYA). Residues 35–172 (DPDIAVTNKQ…GIKIIIDFAP (138 aa)) form an A1 region. Residues Asp-61, Asn-63, Asn-66, and Asn-67 each contribute to the Ca(2+) site. Residues Cys-77 and Cys-84 are joined by a disulfide bond. 2 residues coordinate Ca(2+): Gly-85 and Asp-87. 134 to 135 (YW) lines the substrate pocket. Asn-173 is a binding site for Ca(2+). The segment at 173–236 (NHTSPAMETD…NLYDLADFNH (64 aa)) is b. His-174 serves as a coordination point for substrate. Ile-224 contacts Ca(2+). 227–230 (NLYD) contacts substrate. A Ca(2+)-binding site is contributed by Asp-233. Residues 237–440 (NNATIDKYFK…LRKSNPAIAY (204 aa)) form an A2 region. Arg-261 lines the substrate pocket. Asp-263 acts as the Nucleophile in catalysis. 266–267 (KH) serves as a coordination point for substrate. His-267 lines the Ca(2+) pocket. The active-site Proton donor is the Glu-291. 3 residues coordinate substrate: His-361, Asp-405, and Arg-409. A c region spans residues 441 to 528 (GSTQQRWINN…ATAVWQYTAA (88 aa)). Positions 529–614 (ETTPTIGHVG…SNAYNHFTIL (86 aa)) are d. The region spanning 532-612 (PTIGHVGPVM…VNSNAYNHFT (81 aa)) is the IPT/TIG domain. Residues 613–718 (ILTGDQVTVR…GTATVTVNWQ (106 aa)) form the CBM20 domain. The segment at 615 to 718 (TGDQVTVRFV…GTATVTVNWQ (104 aa)) is e.

The protein belongs to the glycosyl hydrolase 13 family. In terms of assembly, monomer. It depends on Ca(2+) as a cofactor.

It is found in the secreted. The catalysed reaction is Cyclizes part of a (1-&gt;4)-alpha-D-glucan chain by formation of a (1-&gt;4)-alpha-D-glucosidic bond.. This Bacillus sp. (strain 6.6.3) protein is Cyclomaltodextrin glucanotransferase (cgt).